The following is a 354-amino-acid chain: Kelch domain-containing protein 8B (354 aa).

8 Kelch repeats span residues 1 to 31, 32 to 79, 81 to 127, 128 to 175, 176 to 222, 224 to 281, 282 to 329, and 331 to 354; these read MSAG…HQDG, HLLV…VLGK, VLVV…ERDG, MVYA…LHGN, KIYV…MAEG, VFSL…SLGG, HIVA…QAGP, and LFVI…RDGV.

The protein localises to the cytoplasm. The protein resides in the midbody. Functionally, involved in pinching off the separated nuclei at the cleavage furrow and in cytokinesis. Required for mitotic integrity and maintenance of chromosomal stability. Protects cells against mitotic errors, centrosomal amplification, micronucleus formation and aneuploidy. Plays a key role of midbody function involving abscission of the daughter cells during cytokinesis and appropriate chromosomal and nuclear segregation into the daughter cells. The protein is Kelch domain-containing protein 8B of Homo sapiens (Human).